Reading from the N-terminus, the 190-residue chain is Peptidyl-tRNA hydrolase (190 aa).

Tyrosine 18 contacts tRNA. The active-site Proton acceptor is histidine 23. Residues tyrosine 69, asparagine 71, and asparagine 117 each coordinate tRNA.

It belongs to the PTH family. Monomer.

The protein localises to the cytoplasm. The catalysed reaction is an N-acyl-L-alpha-aminoacyl-tRNA + H2O = an N-acyl-L-amino acid + a tRNA + H(+). Functionally, hydrolyzes ribosome-free peptidyl-tRNAs (with 1 or more amino acids incorporated), which drop off the ribosome during protein synthesis, or as a result of ribosome stalling. Its function is as follows. Catalyzes the release of premature peptidyl moieties from peptidyl-tRNA molecules trapped in stalled 50S ribosomal subunits, and thus maintains levels of free tRNAs and 50S ribosomes. This is Peptidyl-tRNA hydrolase from Rhodococcus erythropolis (strain PR4 / NBRC 100887).